Reading from the N-terminus, the 212-residue chain is Riboflavin synthase (212 aa).

Lumazine-binding repeat units follow at residues 1-97 (MFTG…VGGH) and 98-195 (LVSG…VDSV). 2,4-dihydroxypteridine-binding positions include 4 to 6 (GIV), 48 to 50 (CLT), 62 to 67 (DIVEET), 101 to 103 (GHI), Lys137, 146 to 148 (SLT), and 160 to 165 (FLIPET).

Homotrimer.

The catalysed reaction is 2 6,7-dimethyl-8-(1-D-ribityl)lumazine + H(+) = 5-amino-6-(D-ribitylamino)uracil + riboflavin. Its pathway is cofactor biosynthesis; riboflavin biosynthesis; riboflavin from 2-hydroxy-3-oxobutyl phosphate and 5-amino-6-(D-ribitylamino)uracil: step 2/2. Its function is as follows. Catalyzes the dismutation of two molecules of 6,7-dimethyl-8-ribityllumazine, resulting in the formation of riboflavin and 5-amino-6-(D-ribitylamino)uracil. This Buchnera aphidicola subsp. Baizongia pistaciae (strain Bp) protein is Riboflavin synthase (ribE).